Here is a 177-residue protein sequence, read N- to C-terminus: Tumor necrosis factor ligand superfamily member 18 (177 aa).

Residues M1–W27 lie on the Cytoplasmic side of the membrane. Residues L28–F48 traverse the membrane as a helical; Signal-anchor for type II membrane protein segment. The THD domain occupies I47 to L170. Residues L49–S177 lie on the Extracellular side of the membrane. Residues C58 and C78 are joined by a disulfide bond. N-linked (GlcNAc...) asparagine glycans are attached at residues N129 and N161.

It belongs to the tumor necrosis factor family. As to quaternary structure, homodimer. Homotrimer. Expressed at high levels in the small intestine, ovary, testis, kidney and endothelial cells.

The protein localises to the cell membrane. Cytokine that binds to TNFRSF18/AITR/GITR. Regulates T-cell responses. Can function as costimulator and lower the threshold for T-cell activation and T-cell proliferation. Important for interactions between activated T-lymphocytes and endothelial cells. Mediates activation of NF-kappa-B. Triggers increased phosphorylation of STAT1 and up-regulates expression of VCAM1 and ICAM1. Promotes leukocyte adhesion to endothelial cells. Regulates migration of monocytes from the splenic reservoir to sites of inflammation. The polypeptide is Tumor necrosis factor ligand superfamily member 18 (Homo sapiens (Human)).